The sequence spans 359 residues: Probable cinnamyl alcohol dehydrogenase 8A (359 aa).

Residue cysteine 45 coordinates Zn(2+). Threonine 47 lines the NADP(+) pocket. Zn(2+) is bound by residues histidine 67, glutamate 68, cysteine 98, cysteine 101, cysteine 104, cysteine 112, and cysteine 161. NADP(+)-binding positions include threonine 165, 186-191, 209-214, threonine 249, glycine 273, and 296-298; these read GLGGLG, SSSPAK, and SGG.

Belongs to the zinc-containing alcohol dehydrogenase family. As to quaternary structure, homodimer. The cofactor is Zn(2+).

It catalyses the reaction (E)-cinnamyl alcohol + NADP(+) = (E)-cinnamaldehyde + NADPH + H(+). The catalysed reaction is (E)-coniferol + NADP(+) = (E)-coniferaldehyde + NADPH + H(+). It carries out the reaction (E)-sinapyl alcohol + NADP(+) = (E)-sinapaldehyde + NADPH + H(+). The enzyme catalyses (E)-4-coumaroyl alcohol + NADP(+) = (E)-4-coumaraldehyde + NADPH + H(+). It catalyses the reaction (E)-caffeyl alcohol + NADP(+) = (E)-caffeyl aldehyde + NADPH + H(+). Its pathway is aromatic compound metabolism; phenylpropanoid biosynthesis. Its function is as follows. Involved in lignin biosynthesis. Catalyzes the final step specific for the production of lignin monomers. Catalyzes the NADPH-dependent reduction of coniferaldehyde, 5-hydroxyconiferaldehyde, sinapaldehyde, 4-coumaraldehyde and caffeyl aldehyde to their respective alcohols. This chain is Probable cinnamyl alcohol dehydrogenase 8A, found in Oryza sativa subsp. japonica (Rice).